Consider the following 206-residue polypeptide: Phosphoheptose isomerase (206 aa).

Positions 37–195 (LVDAFKAGKK…IEQKMDINNE (159 aa)) constitute an SIS domain. Residue 52-54 (NGG) participates in substrate binding. Zn(2+) contacts are provided by H61 and E65. Substrate is bound by residues E65, 93 to 94 (ND), 119 to 121 (STS), S124, and Q172. Positions 172 and 180 each coordinate Zn(2+).

This sequence belongs to the SIS family. GmhA subfamily. As to quaternary structure, homotetramer. The cofactor is Zn(2+).

The protein resides in the cytoplasm. It catalyses the reaction 2 D-sedoheptulose 7-phosphate = D-glycero-alpha-D-manno-heptose 7-phosphate + D-glycero-beta-D-manno-heptose 7-phosphate. It functions in the pathway carbohydrate biosynthesis; D-glycero-D-manno-heptose 7-phosphate biosynthesis; D-glycero-alpha-D-manno-heptose 7-phosphate and D-glycero-beta-D-manno-heptose 7-phosphate from sedoheptulose 7-phosphate: step 1/1. Catalyzes the isomerization of sedoheptulose 7-phosphate in D-glycero-D-manno-heptose 7-phosphate. The sequence is that of Phosphoheptose isomerase from Hamiltonella defensa subsp. Acyrthosiphon pisum (strain 5AT).